A 517-amino-acid polypeptide reads, in one-letter code: Ribonuclease Y (517 aa).

A helical membrane pass occupies residues 1-21; it reads MIESLIALIAAIVGLGIGYLV. A KH domain is found at 207–273; sequence LINVINIKND…TKVIELLVED (67 aa). Residues 333–426 enclose the HD domain; sequence ALAHSLEVAH…VCAADTLSAA (94 aa).

This sequence belongs to the RNase Y family.

It localises to the cell membrane. In terms of biological role, endoribonuclease that initiates mRNA decay. This chain is Ribonuclease Y, found in Campylobacter jejuni subsp. jejuni serotype O:2 (strain ATCC 700819 / NCTC 11168).